A 68-amino-acid polypeptide reads, in one-letter code: Sec-independent protein translocase protein TatA (68 aa).

Residues 1 to 21 traverse the membrane as a helical segment; that stretch reads MGSFSIWHWLIVLVVVLLLFG. The interval 46-68 is disordered; it reads EEAASADKTIDGKTVEHKSDEVR. Over residues 53–68 the composition is skewed to basic and acidic residues; it reads KTIDGKTVEHKSDEVR.

It belongs to the TatA/E family. The Tat system comprises two distinct complexes: a TatABC complex, containing multiple copies of TatA, TatB and TatC subunits, and a separate TatA complex, containing only TatA subunits. Substrates initially bind to the TatABC complex, which probably triggers association of the separate TatA complex to form the active translocon.

It is found in the cell inner membrane. Part of the twin-arginine translocation (Tat) system that transports large folded proteins containing a characteristic twin-arginine motif in their signal peptide across membranes. TatA could form the protein-conducting channel of the Tat system. The sequence is that of Sec-independent protein translocase protein TatA from Sinorhizobium fredii (strain NBRC 101917 / NGR234).